Here is a 1378-residue protein sequence, read N- to C-terminus: DNA-directed RNA polymerase subunit beta' (1378 aa).

Positions 69, 71, 84, and 87 each coordinate Zn(2+). Positions 460, 462, and 464 each coordinate Mg(2+). Residues Cys-808, Cys-882, Cys-889, and Cys-892 each contribute to the Zn(2+) site.

It belongs to the RNA polymerase beta' chain family. The RNAP catalytic core consists of 2 alpha, 1 beta, 1 beta' and 1 omega subunit. When a sigma factor is associated with the core the holoenzyme is formed, which can initiate transcription. Mg(2+) serves as cofactor. It depends on Zn(2+) as a cofactor.

The catalysed reaction is RNA(n) + a ribonucleoside 5'-triphosphate = RNA(n+1) + diphosphate. DNA-dependent RNA polymerase catalyzes the transcription of DNA into RNA using the four ribonucleoside triphosphates as substrates. This chain is DNA-directed RNA polymerase subunit beta', found in Rickettsia canadensis (strain McKiel).